A 66-amino-acid chain; its full sequence is Protein translocase subunit SecE (66 aa).

A helical membrane pass occupies residues L29–V49.

This sequence belongs to the SecE/SEC61-gamma family. Component of the Sec protein translocase complex. Heterotrimer consisting of SecY, SecE and SecG subunits. The heterotrimers can form oligomers, although 1 heterotrimer is thought to be able to translocate proteins. Interacts with the ribosome. Interacts with SecDF, and other proteins may be involved. Interacts with SecA.

It localises to the cell inner membrane. Functionally, essential subunit of the Sec protein translocation channel SecYEG. Clamps together the 2 halves of SecY. May contact the channel plug during translocation. The chain is Protein translocase subunit SecE from Rickettsia montanensis.